We begin with the raw amino-acid sequence, 367 residues long: Tape measure protein (367 aa).

The protein belongs to the skunalikevirus tape measure protein family.

It is found in the virion. Tape measure protein. Serves as a base for tail tube protein polymerization and acts as a template for tail length determination. The chain is Tape measure protein from Lactococcus lactis (Lactococcus lactis bacteriophage F4-1).